We begin with the raw amino-acid sequence, 353 residues long: Ribosomal RNA large subunit methyltransferase M (353 aa).

S-adenosyl-L-methionine contacts are provided by residues Ser183, 216–219, Asp235, Asp255, and Asp271; that span reads APGG. Lys300 functions as the Proton acceptor in the catalytic mechanism.

Belongs to the class I-like SAM-binding methyltransferase superfamily. RNA methyltransferase RlmE family. RlmM subfamily. In terms of assembly, monomer.

It localises to the cytoplasm. The enzyme catalyses cytidine(2498) in 23S rRNA + S-adenosyl-L-methionine = 2'-O-methylcytidine(2498) in 23S rRNA + S-adenosyl-L-homocysteine + H(+). In terms of biological role, catalyzes the 2'-O-methylation at nucleotide C2498 in 23S rRNA. This chain is Ribosomal RNA large subunit methyltransferase M, found in Azotobacter vinelandii (strain DJ / ATCC BAA-1303).